Consider the following 241-residue polypeptide: ATP synthase subunit a (241 aa).

Helical transmembrane passes span 30–50 (GQVFMTSWILIGALLTLVVVG), 91–111 (FIGTLFLFIFVSNWGGALIPW), 128–148 (INTTVALALLVSLSYFYAGLS), 193–213 (LVVAVLVFLVPLVLPVPVMFL), and 214–234 (GLFTSAIQALIFATLAAYYIG).

The protein belongs to the ATPase A chain family. In terms of assembly, F-type ATPases have 2 components, CF(1) - the catalytic core - and CF(0) - the membrane proton channel. CF(1) has five subunits: alpha(3), beta(3), gamma(1), delta(1), epsilon(1). CF(0) has four main subunits: a, b, b' and c.

It is found in the cellular thylakoid membrane. Its function is as follows. Key component of the proton channel; it plays a direct role in the translocation of protons across the membrane. The chain is ATP synthase subunit a from Prochlorococcus marinus (strain SARG / CCMP1375 / SS120).